A 262-amino-acid chain; its full sequence is Acyl-[acyl-carrier-protein]--UDP-N-acetylglucosamine O-acyltransferase (262 aa).

This sequence belongs to the transferase hexapeptide repeat family. LpxA subfamily. As to quaternary structure, homotrimer.

The protein resides in the cytoplasm. It catalyses the reaction a (3R)-hydroxyacyl-[ACP] + UDP-N-acetyl-alpha-D-glucosamine = a UDP-3-O-[(3R)-3-hydroxyacyl]-N-acetyl-alpha-D-glucosamine + holo-[ACP]. It participates in glycolipid biosynthesis; lipid IV(A) biosynthesis; lipid IV(A) from (3R)-3-hydroxytetradecanoyl-[acyl-carrier-protein] and UDP-N-acetyl-alpha-D-glucosamine: step 1/6. Functionally, involved in the biosynthesis of lipid A, a phosphorylated glycolipid that anchors the lipopolysaccharide to the outer membrane of the cell. The sequence is that of Acyl-[acyl-carrier-protein]--UDP-N-acetylglucosamine O-acyltransferase from Psychromonas ingrahamii (strain DSM 17664 / CCUG 51855 / 37).